The chain runs to 355 residues: Uroporphyrinogen decarboxylase (355 aa).

Residues 36-40 (RQAGR), Asp85, Tyr160, Ser215, and His334 contribute to the substrate site.

This sequence belongs to the uroporphyrinogen decarboxylase family. As to quaternary structure, homodimer.

It is found in the cytoplasm. The catalysed reaction is uroporphyrinogen III + 4 H(+) = coproporphyrinogen III + 4 CO2. It participates in porphyrin-containing compound metabolism; protoporphyrin-IX biosynthesis; coproporphyrinogen-III from 5-aminolevulinate: step 4/4. Catalyzes the decarboxylation of four acetate groups of uroporphyrinogen-III to yield coproporphyrinogen-III. The polypeptide is Uroporphyrinogen decarboxylase (Rhodococcus jostii (strain RHA1)).